The following is a 453-amino-acid chain: Bifunctional protein GlmU (453 aa).

The interval 1 to 231 (MERTCLAVIL…EIEMTGCNTR (231 aa)) is pyrophosphorylase. Residues 10–13 (LAAG), K24, Q77, 82–83 (GT), 105–107 (YGD), G143, E157, N172, and N229 each bind UDP-N-acetyl-alpha-D-glucosamine. Position 107 (D107) interacts with Mg(2+). Mg(2+) is bound at residue N229. Residues 232-252 (AELAVIERFWQERRRHQLMLS) form a linker region. Positions 253–453 (GVTMIAPETV…ATKAAKKAKG (201 aa)) are N-acetyltransferase. R318 and K336 together coordinate UDP-N-acetyl-alpha-D-glucosamine. H348 functions as the Proton acceptor in the catalytic mechanism. Residues Y351 and N362 each coordinate UDP-N-acetyl-alpha-D-glucosamine. Acetyl-CoA contacts are provided by residues A365, 371-372 (NY), S390, S408, and R425.

This sequence in the N-terminal section; belongs to the N-acetylglucosamine-1-phosphate uridyltransferase family. It in the C-terminal section; belongs to the transferase hexapeptide repeat family. Homotrimer. Requires Mg(2+) as cofactor.

Its subcellular location is the cytoplasm. It carries out the reaction alpha-D-glucosamine 1-phosphate + acetyl-CoA = N-acetyl-alpha-D-glucosamine 1-phosphate + CoA + H(+). The enzyme catalyses N-acetyl-alpha-D-glucosamine 1-phosphate + UTP + H(+) = UDP-N-acetyl-alpha-D-glucosamine + diphosphate. It functions in the pathway nucleotide-sugar biosynthesis; UDP-N-acetyl-alpha-D-glucosamine biosynthesis; N-acetyl-alpha-D-glucosamine 1-phosphate from alpha-D-glucosamine 6-phosphate (route II): step 2/2. It participates in nucleotide-sugar biosynthesis; UDP-N-acetyl-alpha-D-glucosamine biosynthesis; UDP-N-acetyl-alpha-D-glucosamine from N-acetyl-alpha-D-glucosamine 1-phosphate: step 1/1. The protein operates within bacterial outer membrane biogenesis; LPS lipid A biosynthesis. Its function is as follows. Catalyzes the last two sequential reactions in the de novo biosynthetic pathway for UDP-N-acetylglucosamine (UDP-GlcNAc). The C-terminal domain catalyzes the transfer of acetyl group from acetyl coenzyme A to glucosamine-1-phosphate (GlcN-1-P) to produce N-acetylglucosamine-1-phosphate (GlcNAc-1-P), which is converted into UDP-GlcNAc by the transfer of uridine 5-monophosphate (from uridine 5-triphosphate), a reaction catalyzed by the N-terminal domain. This is Bifunctional protein GlmU from Rhizobium leguminosarum bv. trifolii (strain WSM2304).